Here is a 65-residue protein sequence, read N- to C-terminus: Hirudin-3A' (65 aa).

Residues 1-3 (VVY) are interaction with thrombin active site. Cystine bridges form between Cys-6/Cys-14, Cys-16/Cys-28, and Cys-22/Cys-39. Residues 32-65 (SDGEKNECVTGEGTPKPQSHNDGDFEEIPEEYLQ) are disordered. Residue Thr-45 is glycosylated (O-linked (GalNAc...) threonine). The interval 55-65 (DFEEIPEEYLQ) is interaction with fibrinogen-binding exosite of thrombin. The span at 55–65 (DFEEIPEEYLQ) shows a compositional bias: acidic residues. The residue at position 63 (Tyr-63) is a Sulfotyrosine.

This sequence belongs to the protease inhibitor I14 (hirudin) family.

It localises to the secreted. Functionally, hirudin is a potent thrombin-specific protease inhibitor. It forms a stable non-covalent complex with alpha-thrombin, thereby abolishing its ability to cleave fibrinogen. This chain is Hirudin-3A', found in Hirudo medicinalis (Medicinal leech).